We begin with the raw amino-acid sequence, 93 residues long: Large ribosomal subunit protein uL23cz/uL23cy (93 aa).

The protein belongs to the universal ribosomal protein uL23 family. As to quaternary structure, part of the 50S ribosomal subunit.

The protein localises to the plastid. Its subcellular location is the chloroplast. In terms of biological role, binds to 23S rRNA. This Panax ginseng (Korean ginseng) protein is Large ribosomal subunit protein uL23cz/uL23cy (rpl23-A).